A 331-amino-acid polypeptide reads, in one-letter code: Pyruvate synthase subunit PorB (331 aa).

Residues Cys-21, Cys-24, Cys-59, and Cys-222 each coordinate [4Fe-4S] cluster.

Heterotetramer of one alpha, one beta, one delta and one gamma chain. [4Fe-4S] cluster serves as cofactor.

The catalysed reaction is 2 oxidized [2Fe-2S]-[ferredoxin] + pyruvate + CoA = 2 reduced [2Fe-2S]-[ferredoxin] + acetyl-CoA + CO2 + H(+). The chain is Pyruvate synthase subunit PorB (porB) from Pyrococcus furiosus (strain ATCC 43587 / DSM 3638 / JCM 8422 / Vc1).